Here is a 407-residue protein sequence, read N- to C-terminus: Na(+)-translocating NADH-quinone reductase subunit F (407 aa).

The helical transmembrane segment at 6-26 threads the bilayer; it reads IFLAIGMFTAIVLGLVAIILV. Residues 35–127 enclose the 2Fe-2S ferredoxin-type domain; that stretch reads GDVTIQINGE…DMQIRVPEEV (93 aa). 4 residues coordinate [2Fe-2S] cluster: cysteine 70, cysteine 76, cysteine 79, and cysteine 111. Residues 130–269 enclose the FAD-binding FR-type domain; it reads VKKWECTVES…YGPFGEFFAK (140 aa). A catalytic region spans residues 272-389; it reads EAEMVFIGGG…PMMNAAVIKM (118 aa).

Belongs to the NqrF family. Composed of six subunits; NqrA, NqrB, NqrC, NqrD, NqrE and NqrF. The cofactor is [2Fe-2S] cluster. It depends on FAD as a cofactor.

It localises to the cell inner membrane. It carries out the reaction a ubiquinone + n Na(+)(in) + NADH + H(+) = a ubiquinol + n Na(+)(out) + NAD(+). In terms of biological role, NQR complex catalyzes the reduction of ubiquinone-1 to ubiquinol by two successive reactions, coupled with the transport of Na(+) ions from the cytoplasm to the periplasm. The first step is catalyzed by NqrF, which accepts electrons from NADH and reduces ubiquinone-1 to ubisemiquinone by a one-electron transfer pathway. This Pseudomonas aeruginosa (strain ATCC 15692 / DSM 22644 / CIP 104116 / JCM 14847 / LMG 12228 / 1C / PRS 101 / PAO1) protein is Na(+)-translocating NADH-quinone reductase subunit F.